Reading from the N-terminus, the 452-residue chain is Imaginal disk growth factor 6 (452 aa).

The first 18 residues, Met1–Ala18, serve as a signal peptide directing secretion. Residues Lys29–Asn452 enclose the GH18 domain. Cys33 and Cys60 form a disulfide bridge. Asn233 is a glycosylation site (N-linked (GlcNAc...) asparagine). A disulfide bridge links Cys352 with Cys435.

Belongs to the glycosyl hydrolase 18 family. IDGF subfamily. Glycosylated. In larvae, it is expressed in the fat body and by hemocytes.

It is found in the secreted. Its function is as follows. Probably required to stimulate the proliferation, polarization and motility of imaginal disk cells. May act by stabilizing the binding of insulin-like peptides to its receptor through a simultaneous interaction with both molecules to form a multiprotein signaling complex. The sequence is that of Imaginal disk growth factor 6 from Drosophila melanogaster (Fruit fly).